The primary structure comprises 321 residues: Lipoyl synthase (321 aa).

[4Fe-4S] cluster is bound by residues Cys68, Cys73, Cys79, Cys94, Cys98, Cys101, and Ser308. The 218-residue stretch at 80–297 (FNHGTATFMI…KEVALELGFT (218 aa)) folds into the Radical SAM core domain.

The protein belongs to the radical SAM superfamily. Lipoyl synthase family. [4Fe-4S] cluster is required as a cofactor.

The protein localises to the cytoplasm. The enzyme catalyses [[Fe-S] cluster scaffold protein carrying a second [4Fe-4S](2+) cluster] + N(6)-octanoyl-L-lysyl-[protein] + 2 oxidized [2Fe-2S]-[ferredoxin] + 2 S-adenosyl-L-methionine + 4 H(+) = [[Fe-S] cluster scaffold protein] + N(6)-[(R)-dihydrolipoyl]-L-lysyl-[protein] + 4 Fe(3+) + 2 hydrogen sulfide + 2 5'-deoxyadenosine + 2 L-methionine + 2 reduced [2Fe-2S]-[ferredoxin]. The protein operates within protein modification; protein lipoylation via endogenous pathway; protein N(6)-(lipoyl)lysine from octanoyl-[acyl-carrier-protein]: step 2/2. Catalyzes the radical-mediated insertion of two sulfur atoms into the C-6 and C-8 positions of the octanoyl moiety bound to the lipoyl domains of lipoate-dependent enzymes, thereby converting the octanoylated domains into lipoylated derivatives. The sequence is that of Lipoyl synthase from Vibrio cholerae serotype O1 (strain ATCC 39315 / El Tor Inaba N16961).